A 167-amino-acid polypeptide reads, in one-letter code: Cytochrome c-type biogenesis protein CcmE (167 aa).

Topologically, residues 1 to 7 are cytoplasmic; sequence MTRKTRR. A helical; Signal-anchor for type II membrane protein membrane pass occupies residues 8–28; that stretch reads LWIVIACLACVGSAAALTLRA. Topologically, residues 29–167 are periplasmic; it reads FSSNIVFFMA…DTMTAKKAGG (139 aa). Heme contacts are provided by His-125 and Tyr-129. The span at 141-150 shows a compositional bias: basic and acidic residues; the sequence is TGKWDPRFGK. The segment at 141-167 is disordered; the sequence is TGKWDPRFGKAPDASSWDTMTAKKAGG.

It belongs to the CcmE/CycJ family.

It localises to the cell inner membrane. Its function is as follows. Heme chaperone required for the biogenesis of c-type cytochromes. Transiently binds heme delivered by CcmC and transfers the heme to apo-cytochromes in a process facilitated by CcmF and CcmH. In Gluconobacter oxydans (strain 621H) (Gluconobacter suboxydans), this protein is Cytochrome c-type biogenesis protein CcmE.